A 229-amino-acid polypeptide reads, in one-letter code: Large ribosomal subunit protein uL1 (229 aa).

The protein belongs to the universal ribosomal protein uL1 family. Part of the 50S ribosomal subunit.

Binds directly to 23S rRNA. The L1 stalk is quite mobile in the ribosome, and is involved in E site tRNA release. Its function is as follows. Protein L1 is also a translational repressor protein, it controls the translation of the L11 operon by binding to its mRNA. The sequence is that of Large ribosomal subunit protein uL1 from Streptococcus pneumoniae (strain ATCC 700669 / Spain 23F-1).